Consider the following 552-residue polypeptide: Urocanate hydratase (552 aa).

Residues 49-50 (GG), glutamine 127, 173-175 (GMG), aspartate 193, 239-240 (NA), 260-264 (QTSAH), 270-271 (YI), and tyrosine 319 each bind NAD(+). Cysteine 407 is an active-site residue. Glycine 489 serves as a coordination point for NAD(+).

The protein belongs to the urocanase family. The cofactor is NAD(+).

The protein localises to the cytoplasm. The catalysed reaction is 4-imidazolone-5-propanoate = trans-urocanate + H2O. It participates in amino-acid degradation; L-histidine degradation into L-glutamate; N-formimidoyl-L-glutamate from L-histidine: step 2/3. Catalyzes the conversion of urocanate to 4-imidazolone-5-propionate. The protein is Urocanate hydratase of Bacillus cereus (strain ATCC 10987 / NRS 248).